A 186-amino-acid polypeptide reads, in one-letter code: Tumor necrosis factor alpha-induced protein 8-like protein 1 (186 aa).

This sequence belongs to the TNFAIP8 family.

Its subcellular location is the cytoplasm. In Gallus gallus (Chicken), this protein is Tumor necrosis factor alpha-induced protein 8-like protein 1 (TNFAIP8L1).